Consider the following 428-residue polypeptide: Enolase (428 aa).

Residue glutamine 165 coordinates (2R)-2-phosphoglycerate. Residue glutamate 207 is the Proton donor of the active site. Aspartate 244, glutamate 283, and aspartate 310 together coordinate Mg(2+). Residues lysine 335, arginine 364, serine 365, and lysine 386 each coordinate (2R)-2-phosphoglycerate. Catalysis depends on lysine 335, which acts as the Proton acceptor.

Belongs to the enolase family. It depends on Mg(2+) as a cofactor.

The protein localises to the cytoplasm. The protein resides in the secreted. It localises to the cell surface. The catalysed reaction is (2R)-2-phosphoglycerate = phosphoenolpyruvate + H2O. It functions in the pathway carbohydrate degradation; glycolysis; pyruvate from D-glyceraldehyde 3-phosphate: step 4/5. Its function is as follows. Catalyzes the reversible conversion of 2-phosphoglycerate (2-PG) into phosphoenolpyruvate (PEP). It is essential for the degradation of carbohydrates via glycolysis. The protein is Enolase of Chlamydia pneumoniae (Chlamydophila pneumoniae).